The sequence spans 59 residues: Protein ORF5a (59 aa).

A helical; Signal-anchor for type III membrane protein transmembrane segment spans residues 13–33 (VIYDCIAILALGCAITCLLLI).

It localises to the membrane. The protein is Protein ORF5a (GP5) of Equine arteritis virus (strain Bucyrus) (EAV).